A 118-amino-acid chain; its full sequence is Succinate dehydrogenase assembly factor 1, mitochondrial (118 aa).

Residues 14-16 (LYR) carry the LYR motif 1; required for interaction with HSC20 motif. The short motif at 53 to 55 (LYR) is the LYR motif 2; not required for interaction with HSC20 element. Residues 53–65 (LYRRGRRQLQMLR) are interaction with SDHB. The disordered stretch occupies residues 72–118 (MGAFVRTRGPTEESNGAGAPGTLSGEGDDPRKPLDSMRTPKTPLDGR).

It belongs to the complex I LYR family. SDHAF1 subfamily. Interacts with SDHB within an SDHA-SDHB subcomplex. Also interacts with the iron-sulfur transfer complex formed by HSC20, HSPA9 and ISCU through direct binding to HSC20. Binding of SDHAF1 to SDHB precedes and is necessary for recruitment of the iron-sulfur transfer complex by SDHAF1.

It is found in the mitochondrion matrix. Functionally, plays an essential role in the assembly of succinate dehydrogenase (SDH), an enzyme complex (also referred to as respiratory complex II) that is a component of both the tricarboxylic acid (TCA) cycle and the mitochondrial electron transport chain, and which couples the oxidation of succinate to fumarate with the reduction of ubiquinone (coenzyme Q) to ubiquinol. Promotes maturation of the iron-sulfur protein subunit SDHB of the SDH catalytic dimer, protecting it from the deleterious effects of oxidants. May act together with SDHAF3. Contributes to iron-sulfur cluster incorporation into SDHB by binding to SDHB and recruiting the iron-sulfur transfer complex formed by HSC20, HSPA9 and ISCU through direct binding to HSC20. The protein is Succinate dehydrogenase assembly factor 1, mitochondrial of Bos taurus (Bovine).